Consider the following 463-residue polypeptide: Quinolone resistance protein NorB (463 aa).

A run of 14 helical transmembrane segments spans residues 17–37 (IGIV…VNVV), 53–73 (IAVS…GGLA), 86–106 (IILN…LLLI), 107–127 (IGRL…LSII), 142–162 (YWSI…GAVA), 165–185 (LGWR…LFLI), 201–221 (FDIK…ILIT), 230–250 (SLLF…FIVL), 273–293 (TASN…NTFV), 299–319 (YSSL…LIMI), 334–354 (PMLI…LTFL), 357–377 (ILYV…LGIY), 403–423 (MASA…YAIV), and 435–455 (IALW…LLLV).

Belongs to the major facilitator superfamily. TCR/Tet family.

It localises to the cell membrane. Functionally, multidrug efflux pump that acts independently of NorA and is one of the factors that confers resistance against diverse quinolones and chemical compounds. Can facilitate bacterial survival in vivo when overexpressed in an abscess and may contribute to the relative resistance of staphylococcal abscesses to antimicrobial therapy. The chain is Quinolone resistance protein NorB (norB) from Staphylococcus aureus (strain MW2).